The sequence spans 314 residues: Ribosomal RNA small subunit methyltransferase H (314 aa).

S-adenosyl-L-methionine-binding positions include 36–38 (AGH), Asp-56, Phe-83, Asp-104, and Gln-111.

Belongs to the methyltransferase superfamily. RsmH family.

It localises to the cytoplasm. It carries out the reaction cytidine(1402) in 16S rRNA + S-adenosyl-L-methionine = N(4)-methylcytidine(1402) in 16S rRNA + S-adenosyl-L-homocysteine + H(+). Specifically methylates the N4 position of cytidine in position 1402 (C1402) of 16S rRNA. This chain is Ribosomal RNA small subunit methyltransferase H, found in Brevibacillus brevis (strain 47 / JCM 6285 / NBRC 100599).